We begin with the raw amino-acid sequence, 266 residues long: Ribonuclease HII (266 aa).

A disordered region spans residues 19 to 38 (HPGMIRDKEKPAPTKPGKGV). The region spanning 58 to 246 (WPVAGCDEAG…VVAARQKHQP (189 aa)) is the RNase H type-2 domain. The a divalent metal cation site is built by aspartate 64, glutamate 65, and aspartate 155.

The protein belongs to the RNase HII family. Mn(2+) serves as cofactor. It depends on Mg(2+) as a cofactor.

The protein resides in the cytoplasm. It catalyses the reaction Endonucleolytic cleavage to 5'-phosphomonoester.. In terms of biological role, endonuclease that specifically degrades the RNA of RNA-DNA hybrids. The protein is Ribonuclease HII of Rhodopseudomonas palustris (strain BisB18).